Consider the following 1489-residue polypeptide: ZEB2-regulated ABC transporter 1 (1489 aa).

The interval Met1 to Glu55 is disordered. Asn7 is a glycosylation site (N-linked (GlcNAc...) asparagine). Over residues Ser44–Gln53 the composition is skewed to acidic residues. N-linked (GlcNAc...) asparagine glycosylation is found at Asn70, Asn73, Asn118, Asn332, and Asn469. The ABC transporter 1 domain occupies Leu152–Asp408. 5 helical membrane-spanning segments follow: residues Leu513–Ile533, Gly552–Thr572, Ile599–Phe619, Gly628–Phe648, and Met662–Val682. Asn714 is a glycosylation site (N-linked (GlcNAc...) asparagine). The helical transmembrane segment at Gly773 to Ile793 threads the bilayer. Residues Pro811–Asn834 form a disordered region. Residues Glu819 to Asn834 are compositionally biased toward polar residues. The region spanning Phe846–Gly1088 is the ABC transporter 2 domain. An ATP-binding site is contributed by Gly882–Thr889. Helical transmembrane passes span Ala1190–Leu1210, Phe1218–Phe1238, Ile1269–Phe1289, Trp1307–Ile1327, and Ala1333–Ala1353. Asn1402 carries an N-linked (GlcNAc...) asparagine glycan. A helical membrane pass occupies residues Gly1457–Ile1477.

Belongs to the ABC transporter superfamily. ABCG family. PDR (TC 3.A.1.205) subfamily.

The protein localises to the cell membrane. It localises to the vacuole membrane. In terms of biological role, ABC transporter involved in zearalenone production. In Gibberella zeae (strain ATCC MYA-4620 / CBS 123657 / FGSC 9075 / NRRL 31084 / PH-1) (Wheat head blight fungus), this protein is ZEB2-regulated ABC transporter 1.